A 63-amino-acid polypeptide reads, in one-letter code: Large ribosomal subunit protein uL29 (63 aa).

The protein belongs to the universal ribosomal protein uL29 family.

The chain is Large ribosomal subunit protein uL29 from Shewanella loihica (strain ATCC BAA-1088 / PV-4).